A 421-amino-acid chain; its full sequence is UDP-N-acetylglucosamine 1-carboxyvinyltransferase (421 aa).

22–23 (KN) provides a ligand contact to phosphoenolpyruvate. Arginine 94 lines the UDP-N-acetyl-alpha-D-glucosamine pocket. Cysteine 118 acts as the Proton donor in catalysis. Cysteine 118 bears the 2-(S-cysteinyl)pyruvic acid O-phosphothioketal mark. Residues 163–166 (KVSV), aspartate 308, and isoleucine 330 contribute to the UDP-N-acetyl-alpha-D-glucosamine site.

It belongs to the EPSP synthase family. MurA subfamily.

It localises to the cytoplasm. It carries out the reaction phosphoenolpyruvate + UDP-N-acetyl-alpha-D-glucosamine = UDP-N-acetyl-3-O-(1-carboxyvinyl)-alpha-D-glucosamine + phosphate. It participates in cell wall biogenesis; peptidoglycan biosynthesis. Its function is as follows. Cell wall formation. Adds enolpyruvyl to UDP-N-acetylglucosamine. The protein is UDP-N-acetylglucosamine 1-carboxyvinyltransferase of Orientia tsutsugamushi (strain Boryong) (Rickettsia tsutsugamushi).